The primary structure comprises 233 residues: Purine nucleoside phosphorylase DeoD-type (233 aa).

His4 contributes to the a purine D-ribonucleoside binding site. Residues Gly20, Arg24, Arg43, and 87-90 (RIGT) each bind phosphate. Residues 179-181 (EME) and 203-204 (SD) each bind a purine D-ribonucleoside. The Proton donor role is filled by Asp204.

It belongs to the PNP/UDP phosphorylase family. As to quaternary structure, homohexamer; trimer of homodimers.

It carries out the reaction a purine D-ribonucleoside + phosphate = a purine nucleobase + alpha-D-ribose 1-phosphate. The catalysed reaction is a purine 2'-deoxy-D-ribonucleoside + phosphate = a purine nucleobase + 2-deoxy-alpha-D-ribose 1-phosphate. In terms of biological role, catalyzes the reversible phosphorolytic breakdown of the N-glycosidic bond in the beta-(deoxy)ribonucleoside molecules, with the formation of the corresponding free purine bases and pentose-1-phosphate. The chain is Purine nucleoside phosphorylase DeoD-type from Helicobacter pylori (strain G27).